We begin with the raw amino-acid sequence, 76 residues long: VVPYGLGSPRSKRALENLLPTKATDRENRCQCASQKDKKCWNFCQAGKELRAKDLMEKGWNNHKKGKDCSKLGKKC.

Positions cysteine 30–cysteine 44 are endothelin-like.

The protein belongs to the endothelin/sarafotoxin family.

The protein localises to the secreted. In terms of biological role, endothelins are endothelium-derived vasoconstrictor peptides. Probable ligand for G-protein coupled receptors EDNRA and EDNRB which activates PTK2B, BCAR1, BCAR3 and, GTPases RAP1 and RHOA cascade in glomerular mesangial cells. Also binds the DEAR/FBXW7-AS1 receptor. Promotes mesenteric arterial wall remodeling via activation of ROCK signaling and subsequent colocalization of NFATC3 with F-actin filaments. NFATC3 then translocates to the nucleus where it subsequently promotes the transcription of the smooth muscle hypertrophy and differentiation marker ACTA2. This is Endothelin-1 (EDN1) from Macaca fascicularis (Crab-eating macaque).